Consider the following 394-residue polypeptide: Phosphopentomutase (394 aa).

Positions 14, 287, 292, 328, 329, and 340 each coordinate Mn(2+).

The protein belongs to the phosphopentomutase family. Mn(2+) is required as a cofactor.

It is found in the cytoplasm. It catalyses the reaction 2-deoxy-alpha-D-ribose 1-phosphate = 2-deoxy-D-ribose 5-phosphate. The catalysed reaction is alpha-D-ribose 1-phosphate = D-ribose 5-phosphate. It functions in the pathway carbohydrate degradation; 2-deoxy-D-ribose 1-phosphate degradation; D-glyceraldehyde 3-phosphate and acetaldehyde from 2-deoxy-alpha-D-ribose 1-phosphate: step 1/2. Its function is as follows. Isomerase that catalyzes the conversion of deoxy-ribose 1-phosphate (dRib-1-P) and ribose 1-phosphate (Rib-1-P) to deoxy-ribose 5-phosphate (dRib-5-P) and ribose 5-phosphate (Rib-5-P), respectively. The polypeptide is Phosphopentomutase (Listeria monocytogenes serovar 1/2a (strain ATCC BAA-679 / EGD-e)).